We begin with the raw amino-acid sequence, 494 residues long: tRNA-2-methylthio-N(6)-dimethylallyladenosine synthase (494 aa).

The MTTase N-terminal domain maps to 12–131; the sequence is PTYRVVTYGC…LPVLLKRARH (120 aa). [4Fe-4S] cluster-binding residues include C21, C60, C94, C168, C172, and C175. The Radical SAM core domain occupies 154–385; it reads RDSAYSAWVS…ELVDDIAWQE (232 aa). The TRAM domain occupies 387–457; the sequence is KAQVGRAVEV…PHHLVADGGL (71 aa).

The protein belongs to the methylthiotransferase family. MiaB subfamily. Monomer. [4Fe-4S] cluster is required as a cofactor.

The protein resides in the cytoplasm. It carries out the reaction N(6)-dimethylallyladenosine(37) in tRNA + (sulfur carrier)-SH + AH2 + 2 S-adenosyl-L-methionine = 2-methylsulfanyl-N(6)-dimethylallyladenosine(37) in tRNA + (sulfur carrier)-H + 5'-deoxyadenosine + L-methionine + A + S-adenosyl-L-homocysteine + 2 H(+). Functionally, catalyzes the methylthiolation of N6-(dimethylallyl)adenosine (i(6)A), leading to the formation of 2-methylthio-N6-(dimethylallyl)adenosine (ms(2)i(6)A) at position 37 in tRNAs that read codons beginning with uridine. The polypeptide is tRNA-2-methylthio-N(6)-dimethylallyladenosine synthase (Cutibacterium acnes (strain DSM 16379 / KPA171202) (Propionibacterium acnes)).